Here is a 367-residue protein sequence, read N- to C-terminus: Biotin--protein ligase 1, chloroplastic (367 aa).

The transit peptide at 1-37 directs the protein to the chloroplast; the sequence is MEAVRSTTTLSNFHLLNILVLRSLKPLHRLSFSFSAS. Residues 105-289 form the BPL/LPL catalytic domain; that stretch reads IITHRFGRFL…KFEKFFDLFM (185 aa). Biotin is bound by residues 122–124, Q145, 149–151, and K220; these read STH and RGR.

The protein belongs to the biotin--protein ligase family. As to expression, expressed in roots, leaves, stems, flowers, siliques and seeds.

The protein resides in the plastid. It localises to the chloroplast. Its subcellular location is the cytoplasm. The protein localises to the cytosol. The enzyme catalyses apo-[3-methylcrotonoyl-CoA:carbon-dioxide ligase (ADP-forming)] + biotin + ATP = holo-[3-methylcrotonoyl-CoA:carbon-dioxide ligase (ADP-forming)] + AMP + diphosphate + H(+). The catalysed reaction is biotin + L-lysyl-[protein] + ATP = N(6)-biotinyl-L-lysyl-[protein] + AMP + diphosphate + H(+). Its function is as follows. Plays a major role in biotin-dependent carboxylase biotinylation. Catalyzes the addition of biotin to the biotin carboxyl carrier protein (BCCP) subunit of acetyl-CoA carboxylase. Can also biotinylate methylcrotonyl-CoA carboxylase. Is responsible for most, if not all, biotin--protein ligase activity in Arabidopsis. Is essential for plant viability and required for ovule development. The sequence is that of Biotin--protein ligase 1, chloroplastic from Arabidopsis thaliana (Mouse-ear cress).